The chain runs to 46 residues: DNA-directed RNA polymerases I, II, and III subunit rpabc4 (46 aa).

Zn(2+)-binding residues include Cys-7, Cys-10, Cys-24, and Cys-27. Residues 7–27 (CGECGAEHEIKPKEPVKCKDC) form a C4-type zinc finger.

It belongs to the archaeal Rpo12/eukaryotic RPC10 RNA polymerase subunit family. Component of the RNA polymerase I (Pol I), RNA polymerase II (Pol II) and RNA polymerase III (Pol III) complexes consisting of at least 13, 12 and 17 subunits, respectively.

The protein localises to the nucleus. DNA-dependent RNA polymerase catalyzes the transcription of DNA into RNA using the four ribonucleoside triphosphates as substrates. Common component of RNA polymerases I, II and III which synthesize ribosomal RNA precursors, mRNA precursors and many functional non-coding RNAs, and a small RNAs, such as 5S rRNA and tRNAs, respectively. In Dictyostelium discoideum (Social amoeba), this protein is DNA-directed RNA polymerases I, II, and III subunit rpabc4 (polr2k).